We begin with the raw amino-acid sequence, 524 residues long: Keratin, type II cytoskeletal 71 (524 aa).

The segment at 1–130 is head; that stretch reads MSRQFTCKSG…DPEIQKVRAQ (130 aa). The segment at 131 to 166 is coil 1A; it reads EREQIKALNNKFASFIDKVRFLEQQNQVLQTKWELL. The region spanning 131–444 is the IF rod domain; the sequence is EREQIKALNN…KLLESEECRM (314 aa). Residues 167–185 form a linker 1 region; that stretch reads QQLDLNNCKNNLEPILEGH. The interval 186–277 is coil 1B; that stretch reads ISNMRKQLET…CLFEAEMAQI (92 aa). Positions 278-301 are linker 12; sequence QSHISDMSVILSMDNNRNLDLDSI. Positions 302–440 are coil 2; the sequence is IDEVRAQYEE…ATYRKLLESE (139 aa). The tail stretch occupies residues 441–524; that stretch reads ECRMSGEYSS…LSTPSKKGGR (84 aa). A disordered region spans residues 493–524; that stretch reads GGENRSRGSASDYKDTLTKGSSLSTPSKKGGR. The span at 494-509 shows a compositional bias: basic and acidic residues; that stretch reads GENRSRGSASDYKDTL. Polar residues predominate over residues 510–524; the sequence is TKGSSLSTPSKKGGR.

Belongs to the intermediate filament family. Heterodimer of a type I and a type II keratin. Associates with KRT16 and/or KRT17. As to expression, specifically expressed in the inner root sheath (IRS) of the hair follicle. Present in Henle and the Huxley layers of the IRS, while expression in the cuticle is unsure (at protein level).

The protein resides in the cytoplasm. The protein localises to the cytoskeleton. Its function is as follows. Plays a central role in hair formation. Essential component of keratin intermediate filaments in the inner root sheath (IRS) of the hair follicle. This Mus musculus (Mouse) protein is Keratin, type II cytoskeletal 71 (Krt71).